The primary structure comprises 31 residues: Cytochrome b6-f complex subunit 6 (31 aa).

Residues 4–24 (ITSYFGFLLAALTITSALFIG) traverse the membrane as a helical segment.

Belongs to the PetL family. In terms of assembly, the 4 large subunits of the cytochrome b6-f complex are cytochrome b6, subunit IV (17 kDa polypeptide, PetD), cytochrome f and the Rieske protein, while the 4 small subunits are PetG, PetL, PetM and PetN. The complex functions as a dimer.

The protein localises to the plastid. Its subcellular location is the chloroplast thylakoid membrane. In terms of biological role, component of the cytochrome b6-f complex, which mediates electron transfer between photosystem II (PSII) and photosystem I (PSI), cyclic electron flow around PSI, and state transitions. PetL is important for photoautotrophic growth as well as for electron transfer efficiency and stability of the cytochrome b6-f complex. The protein is Cytochrome b6-f complex subunit 6 of Citrus sinensis (Sweet orange).